We begin with the raw amino-acid sequence, 273 residues long: Large ribosomal subunit protein uL2 (273 aa).

A disordered region spans residues 228-273; the sequence is VDHPHGGGEGKTSGGRHPVTPWGFPTKGKKTRKNKRTSKFIVKKRK. Basic residues predominate over residues 254 to 273; it reads KGKKTRKNKRTSKFIVKKRK.

Belongs to the universal ribosomal protein uL2 family. In terms of assembly, part of the 50S ribosomal subunit. Forms a bridge to the 30S subunit in the 70S ribosome.

In terms of biological role, one of the primary rRNA binding proteins. Required for association of the 30S and 50S subunits to form the 70S ribosome, for tRNA binding and peptide bond formation. It has been suggested to have peptidyltransferase activity; this is somewhat controversial. Makes several contacts with the 16S rRNA in the 70S ribosome. In Rickettsia rickettsii (strain Iowa), this protein is Large ribosomal subunit protein uL2.